Consider the following 138-residue polypeptide: Large ribosomal subunit protein uL16 (138 aa).

Belongs to the universal ribosomal protein uL16 family. Part of the 50S ribosomal subunit.

Binds 23S rRNA and is also seen to make contacts with the A and possibly P site tRNAs. The sequence is that of Large ribosomal subunit protein uL16 from Mycoplasma genitalium (strain ATCC 33530 / DSM 19775 / NCTC 10195 / G37) (Mycoplasmoides genitalium).